Here is an 808-residue protein sequence, read N- to C-terminus: MAASERSIDKEVDMGSSFLQKFRLYETRSSFYMIGRDKNRTSWRVLKLDRTEPAEVNIYEDSTAYTEAECFETLRRIHEGNRSSGGLKFVTTCYGIIGFIRFLGPYYMLIITKRKKLGEICGHTVYGVAKSKIITIPHASVLSNVAYSKDEKRYKRLLCTVDLTKDFFFSYSYHIMHTLQRNLSNNVEGHTYYESMFVWNEYLTRRIRNNVKDCMWTVALVYGFFKQVKLSVSEKNFRLTLISRRSRHYAGTRYLKRGVNEKGRVANDVETEQIVFEEAQDGNPGRISSVVQNRGSIPLFWSQETSRLNIKPDIILSPKDPNFEATRLHFENLGRRYGNPIIILNLIKTREKRPRETILRAEFANAIRFINKGLSKEDRLRPLHWDLHKHSRKKGTNVLAILGRLATYALNLTSIFYCQLTPDLRGEGFQNQNPSTLENDDGECSTYDPPSKDETAPNLVVENGNDSKDAKEDQQKEVTMLQKGVLRTNCIDCLDRTNVAQYAYGLVAFGRQLHALGLTESTNIDLDNPLAEDLMGIYETMGDTLALQYGGSAAHNKIFCERRGQWRAATQSQEFFRTLQRYYSNAYMDAEKQDAINVFLGYFQPQSDKPALWELGSDQHYNAARFLANSVPETSRSTMKRSLSESSIISESSPAALGPVGRHGLAEKDEEVKGLSDSAPEISTSETAKIAASLSAPPPILEELGLDDILENDCFCCDGNGEQCTCAAFDMDWVSSSGNSCEDESCGRATVVRSFETIPESRKIESEICVVETVGSNSRKGNKEEEEAISGIPEGYVRWVMDEDGHFW.

The 394-residue stretch at 158–551 (LCTVDLTKDF…GDTLALQYGG (394 aa)) folds into the SAC domain. Positions 429–476 (FQNQNPSTLENDDGECSTYDPPSKDETAPNLVVENGNDSKDAKEDQQK) are disordered. Basic and acidic residues predominate over residues 465–476 (NDSKDAKEDQQK). The Phosphatase catalytic core signature appears at 487 to 498 (RTNCIDCLDRTN).

Component of the PI(3,5)P2 regulatory complex at least composed of ATG18, SAC/FIG4, FAB1 and VAC14. Mg(2+) is required as a cofactor. As to expression, ubiquitous with a higher level of expression in young seedlings than in other tissues.

The protein localises to the vacuole membrane. The catalysed reaction is a 1,2-diacyl-sn-glycero-3-phospho-(1D-myo-inositol-3,5-bisphosphate) + H2O = a 1,2-diacyl-sn-glycero-3-phospho-(1D-myo-inositol-3-phosphate) + phosphate. Its function is as follows. The PI(3,5)P2 regulatory complex regulates both the synthesis and turnover of phosphatidylinositol 3,5-bisphosphate (PtdIns(3,5)P2). This Arabidopsis thaliana (Mouse-ear cress) protein is Phosphoinositide phosphatase SAC2 (SAC2).